The following is a 31-amino-acid chain: Photosystem II reaction center protein Psb30 (31 aa).

A helical membrane pass occupies residues 5–25 (IQLTSLLLIVIAGPLVIALLF).

It belongs to the Psb30/Ycf12 family. As to quaternary structure, PSII is composed of 1 copy each of membrane proteins PsbA, PsbB, PsbC, PsbD, PsbE, PsbF, PsbH, PsbI, PsbJ, PsbK, PsbL, PsbM, PsbT, PsbX, PsbY, PsbZ, Psb30/Ycf12, peripheral proteins of the oxygen-evolving complex and a large number of cofactors. It forms dimeric complexes.

It is found in the plastid. Its subcellular location is the chloroplast thylakoid membrane. A core subunit of photosystem II (PSII), probably helps stabilize the reaction center. This Phacus acuminatus protein is Photosystem II reaction center protein Psb30.